We begin with the raw amino-acid sequence, 245 residues long: Probable transcriptional regulatory protein Ddes_0536 (245 aa).

A disordered region spans residues 1–21 (MAGHSKWANIQHRKGRQDAKR).

It belongs to the TACO1 family.

It localises to the cytoplasm. The protein is Probable transcriptional regulatory protein Ddes_0536 of Desulfovibrio desulfuricans (strain ATCC 27774 / DSM 6949 / MB).